We begin with the raw amino-acid sequence, 244 residues long: E3 ubiquitin-protein ligase RNF166 (244 aa).

The tract at residues 10-30 is disordered; it reads AQRPQAPGPGPPRPPPPAGPA. Over residues 15–28 the composition is skewed to pro residues; it reads APGPGPPRPPPPAG. Residues 40 to 80 form an RING-type zinc finger; the sequence is CPICLEVFHRAVGIAGCGHTFCGECLQPCLQVPSPLCPLCR. Residues cysteine 105, cysteine 108, histidine 120, and cysteine 124 each coordinate Zn(2+). The C2HC RNF-type zinc finger occupies 105–124; it reads CRGCSKKVTLAKMRSHVSSC. One can recognise a UIM domain in the interval 228–244; that stretch reads DEEAALQAALALSLSEN.

Its subcellular location is the cytoplasm. It carries out the reaction S-ubiquitinyl-[E2 ubiquitin-conjugating enzyme]-L-cysteine + [acceptor protein]-L-lysine = [E2 ubiquitin-conjugating enzyme]-L-cysteine + N(6)-ubiquitinyl-[acceptor protein]-L-lysine.. Its pathway is protein modification; protein ubiquitination. E3 ubiquitin-protein ligase that promotes the ubiquitination of different substrates. In Gallus gallus (Chicken), this protein is E3 ubiquitin-protein ligase RNF166 (RNF166).